Here is a 272-residue protein sequence, read N- to C-terminus: ATP synthase subunit a (272 aa).

Transmembrane regions (helical) follow at residues 42–62 (IDSL…AGFV), 108–128 (FVWI…LPCI), 140–162 (ILPS…LMIF), 177–197 (LIYH…LEII), 219–239 (LIFI…LSVP), and 241–261 (AIFH…LTII).

This sequence belongs to the ATPase A chain family. F-type ATPases have 2 components, CF(1) - the catalytic core - and CF(0) - the membrane proton channel. CF(1) has five subunits: alpha(3), beta(3), gamma(1), delta(1), epsilon(1). CF(0) has three main subunits: a(1), b(2) and c(9-12). The alpha and beta chains form an alternating ring which encloses part of the gamma chain. CF(1) is attached to CF(0) by a central stalk formed by the gamma and epsilon chains, while a peripheral stalk is formed by the delta and b chains.

Its subcellular location is the cell inner membrane. Its function is as follows. Key component of the proton channel; it plays a direct role in the translocation of protons across the membrane. In Blochmanniella floridana, this protein is ATP synthase subunit a.